The primary structure comprises 227 residues: 2,3-bisphosphoglycerate-dependent phosphoglycerate mutase (227 aa).

Substrate is bound by residues 7 to 14, 20 to 21, arginine 59, 86 to 89, lysine 97, 113 to 114, and 182 to 183; these read RHGFSEWN, TG, ERHY, RR, and GN. The Tele-phosphohistidine intermediate role is filled by histidine 8. Glutamate 86 acts as the Proton donor/acceptor in catalysis.

This sequence belongs to the phosphoglycerate mutase family. BPG-dependent PGAM subfamily. As to quaternary structure, homodimer.

It carries out the reaction (2R)-2-phosphoglycerate = (2R)-3-phosphoglycerate. It participates in carbohydrate degradation; glycolysis; pyruvate from D-glyceraldehyde 3-phosphate: step 3/5. Catalyzes the interconversion of 2-phosphoglycerate and 3-phosphoglycerate. This Histophilus somni (strain 129Pt) (Haemophilus somnus) protein is 2,3-bisphosphoglycerate-dependent phosphoglycerate mutase.